Here is a 604-residue protein sequence, read N- to C-terminus: Ectonucleoside triphosphate diphosphohydrolase 7 (604 aa).

Over 1–28 (MARISFSYLCPASWYFTVPTVSPFLRQR) the chain is Cytoplasmic. The helical transmembrane segment at 29-49 (VAFLGLFFISCLLLLMLIIDF) threads the bilayer. At 50–546 (RHWSASLPRD…QAHGSWFRLS (497 aa)) the chain is on the vesicular side. Residue Glu217 is the Proton acceptor of the active site. Asn330 carries an N-linked (GlcNAc...) asparagine glycan. Cys448 and Cys477 are disulfide-bonded. A helical transmembrane segment spans residues 547 to 567 (FVYNHYLFFACILVVLLAIVL). Residues 568-604 (YLLRLRRIHHRQTRASAPLDLLWLEEVVPMMGVQVGP) are Cytoplasmic-facing.

Belongs to the GDA1/CD39 NTPase family. Ca(2+) is required as a cofactor. Requires Mg(2+) as cofactor.

The protein localises to the cytoplasmic vesicle membrane. The enzyme catalyses a ribonucleoside 5'-triphosphate + H2O = a ribonucleoside 5'-diphosphate + phosphate + H(+). It carries out the reaction UTP + H2O = UDP + phosphate + H(+). It catalyses the reaction GTP + H2O = GDP + phosphate + H(+). The catalysed reaction is CTP + H2O = CDP + phosphate + H(+). Functionally, catalyzes the hydrolysis of nucleoside triphosphates and diphosphates in a calcium- or magnesium-dependent manner. Preferentially hydrolyzes nucleoside 5'-triphosphates, with substrate preference for UTP &gt; GTP &gt; CTP. Hydrolyzes ATP and nucleoside diphosphates only to a minor extent. This Pongo abelii (Sumatran orangutan) protein is Ectonucleoside triphosphate diphosphohydrolase 7 (ENTPD7).